A 119-amino-acid polypeptide reads, in one-letter code: cAMP-responsive element-binding protein-like 2 (119 aa).

Positions M1–K23 are disordered. Over residues K10–P21 the composition is skewed to basic residues. The bZIP domain occupies K23–S86. The basic motif stretch occupies residues K29 to R60. Residues I62–L69 form a leucine-zipper region. Positions D95–I119 are disordered. The span at S102 to I119 shows a compositional bias: low complexity.

This sequence belongs to the bZIP family. ATF subfamily.

It is found in the nucleus. Probable regulator of creb1 transcriptional activity which is involved in adipose cells differentiation. May also play a regulatory role in the cell cycle. This chain is cAMP-responsive element-binding protein-like 2 (crebl2), found in Danio rerio (Zebrafish).